Consider the following 228-residue polypeptide: 2-C-methyl-D-erythritol 4-phosphate cytidylyltransferase (228 aa).

The protein belongs to the IspD/TarI cytidylyltransferase family. IspD subfamily.

The catalysed reaction is 2-C-methyl-D-erythritol 4-phosphate + CTP + H(+) = 4-CDP-2-C-methyl-D-erythritol + diphosphate. The protein operates within isoprenoid biosynthesis; isopentenyl diphosphate biosynthesis via DXP pathway; isopentenyl diphosphate from 1-deoxy-D-xylulose 5-phosphate: step 2/6. Functionally, catalyzes the formation of 4-diphosphocytidyl-2-C-methyl-D-erythritol from CTP and 2-C-methyl-D-erythritol 4-phosphate (MEP). The protein is 2-C-methyl-D-erythritol 4-phosphate cytidylyltransferase of Actinobacillus pleuropneumoniae serotype 5b (strain L20).